We begin with the raw amino-acid sequence, 217 residues long: Probable disulfide bond formation protein D (217 aa).

The signal sequence occupies residues 1-28; it reads MKSSNKLMALGIVFSIAVLIVIGTIVYS. C66 and C69 are joined by a disulfide.

The protein belongs to the thioredoxin family. DsbA subfamily.

May be required for disulfide bond formation in some proteins. The polypeptide is Probable disulfide bond formation protein D (bdbD) (Bacillus anthracis).